A 952-amino-acid chain; its full sequence is MAWSIALLTPPFFGPGRHVQAKEYREPRGCVMKMSSLKAPVLRIQATEYREPRGRVKMMSSLQAPLLTIQSFSGLRAPSALDYLGRPSPGFLVKYKLAKSSGREKASRCVPKAMFERFTEKAIKVIMLSQEEARRLGHNFVGTEQILLGLIGEGTGIAAKVLKSMGINLKDSRVEVEKIIGRGSGFVAVEIPFTPRAKRVLELSLEEARQLGHNYIGSEHLLLGLLREGEGVAARVLENLGADPSNIRTQVIRMVGENNEVTASVGGGSSGNSKMPTLEEYGTNLTKLAEEGKLDPVVGRQPQIERVVQILARRTKNNPCLIGEPGVGKTAIAEGLAQRIASGDVPETIEGKTVITLDMGLLVAGTKYRGEFEERLKKLMEEIRQSDEIILFIDEVHTLIGAGAAEGAIDAANILKPALARGELQCIGATTIDEYRKHIEKDPALERRFQPVKVPEPTVEEAIQILQGLRERYEIHHKLRYTDEALVAAAQLSHQYISDRFLPDKAIDLIDEAGSRVRLRHAQLPEEARELEKQLRQITKEKNEAVRSQDFEMAGSHRDREIELKAEIANVLSRGKEVAKAENEAEEGGPTVTESDIQHIVATWTGIPVEKVSSDESSRLLQMEQTLHTRVIGQDEAVKAISRAIRRARVGLKNPNRPIASFIFSGPTGVGKSELAKALAAYYFGSEEAMIRLDMSEFMERHTVSKLIGSPPGYVGYTEGGQLTEAVRRRPYTLVLFDEIEKAHPDVFNMMLQILEDGRLTDSKGRTVDFKNTLLIMTSNVGSSVIEKGGRRIGFDLDHDEKDSSYNRIKSLVTEELKQYFRPEFLNRLDEMIVFRQLTKLEVKEIADIMLKEVVARLEVKEIELQVTERFKERVVDEGFDPSYGARPLRRAIMRLLEDSMAEKMLSRDIKEGDSVIVDVDAEGSVVVLSGTTGRVGGFAAEEAMEDPIPIL.

The transit peptide at 1-45 directs the protein to the chloroplast; sequence MAWSIALLTPPFFGPGRHVQAKEYREPRGCVMKMSSLKAPVLRIQ. Residues 115-257 form the Clp R domain; that stretch reads FERFTEKAIK…RTQVIRMVGE (143 aa). Repeat stretches follow at residues 118-183 and 193-257; these read FTEK…IGRG and FTPR…MVGE. Positions 278–525 are i; it reads LEEYGTNLTK…RVRLRHAQLP (248 aa). 323–330 lines the ATP pocket; it reads GEPGVGKT. The 36-residue stretch at 532–567 folds into the UVR domain; sequence EKQLRQITKEKNEAVRSQDFEMAGSHRDREIELKAE. Residues 592–783 form an II region; it reads VTESDIQHIV…LLIMTSNVGS (192 aa). Residue 666 to 673 coordinates ATP; the sequence is GPTGVGKS.

Belongs to the ClpA/ClpB family. ClpC subfamily. As to quaternary structure, homodimer and homohexamer. Hexamerization upon addition of ATP. Interacts with CLPT1. Interacts with CLPS1. Stably associated with the import machinery. Interacts with CLPF. The cofactor is Mg(2+). As to expression, expressed at low levels in roots and inflorescences. Expressed at very low levels in rosette leaves. Expressed in photosynthetic green tissues with high levels in young, developing leaf tissues.

The protein resides in the plastid. Its subcellular location is the chloroplast stroma. It localises to the chloroplast membrane. It carries out the reaction ATP + H2O = ADP + phosphate + H(+). Molecular chaperone. May act as a suppressor of FtsH-mediated thylakoid membrane biogenesis and may enhance photoinhibition. Seems not involved in chloroplastic protein import. Probable component of the TIC-associated stromal import motor involved in inner membrane translocation. Has an ATPase activity, but no ADPase activity. Interacts with transit peptides with a positional preference. Localization of the signal sequence at the N-terminal end of a protein seems mandatory for interaction to take place. The sequence is that of Chaperone protein ClpC2, chloroplastic from Arabidopsis thaliana (Mouse-ear cress).